We begin with the raw amino-acid sequence, 376 residues long: Phosphoserine aminotransferase (376 aa).

Residue Arg54 coordinates L-glutamate. Residues 88–89 (AT), Trp115, Thr165, Asp186, and Gln209 contribute to the pyridoxal 5'-phosphate site. Lys210 bears the N6-(pyridoxal phosphate)lysine mark. Residue 251–252 (NT) participates in pyridoxal 5'-phosphate binding.

Belongs to the class-V pyridoxal-phosphate-dependent aminotransferase family. SerC subfamily. Homodimer. Pyridoxal 5'-phosphate is required as a cofactor.

It localises to the cytoplasm. The enzyme catalyses O-phospho-L-serine + 2-oxoglutarate = 3-phosphooxypyruvate + L-glutamate. It carries out the reaction 4-(phosphooxy)-L-threonine + 2-oxoglutarate = (R)-3-hydroxy-2-oxo-4-phosphooxybutanoate + L-glutamate. Its pathway is amino-acid biosynthesis; L-serine biosynthesis; L-serine from 3-phospho-D-glycerate: step 2/3. It functions in the pathway cofactor biosynthesis; pyridoxine 5'-phosphate biosynthesis; pyridoxine 5'-phosphate from D-erythrose 4-phosphate: step 3/5. Its function is as follows. Catalyzes the reversible conversion of 3-phosphohydroxypyruvate to phosphoserine and of 3-hydroxy-2-oxo-4-phosphonooxybutanoate to phosphohydroxythreonine. This chain is Phosphoserine aminotransferase, found in Rhodopirellula baltica (strain DSM 10527 / NCIMB 13988 / SH1).